The sequence spans 198 residues: Elongation factor Ts (198 aa).

Residues 82-85 (SDFV) form an involved in Mg(2+) ion dislocation from EF-Tu region.

The protein belongs to the EF-Ts family.

The protein localises to the cytoplasm. In terms of biological role, associates with the EF-Tu.GDP complex and induces the exchange of GDP to GTP. It remains bound to the aminoacyl-tRNA.EF-Tu.GTP complex up to the GTP hydrolysis stage on the ribosome. This chain is Elongation factor Ts, found in Desulfosudis oleivorans (strain DSM 6200 / JCM 39069 / Hxd3) (Desulfococcus oleovorans).